A 459-amino-acid chain; its full sequence is DNA primase large subunit (459 aa).

C291, C369, C386, and C428 together coordinate [4Fe-4S] cluster.

The protein belongs to the eukaryotic-type primase large subunit family. As to quaternary structure, heterodimer of a catalytic subunit spp1/pri1 and a regulatory subunit spp2/pri2, also known as the DNA primase complex. Component of the alpha DNA polymerase complex (also known as the alpha DNA polymerase-primase complex) consisting of four subunits: the catalytic subunit pol1, the accessory subunit spb70/pol12, and the primase complex subunits spp1/pri1 and spp2/pri2 respectively. Interacts with orc2; preferentially associates with the unphosphorylated orc2 in G1 pre-Start prior to orc2 being phosphorylated by cdc2, the interaction is mediated by spb70 and might enable the association of the whole alpha DNA polymerase complex to orc2/spb70 complex on chromatin. [4Fe-4S] cluster is required as a cofactor.

It is found in the nucleus. Its subcellular location is the chromosome. In terms of biological role, regulatory subunit of the DNA primase complex and component of the DNA polymerase alpha complex (also known as the alpha DNA polymerase-primase complex - primosome/replisome) which play an essential role in the initiation of DNA synthesis. During the S phase of the cell cycle, the DNA polymerase alpha complex (composed of a catalytic subunit pol1, an accessory subunit spb70/pol12 and two primase subunits, the catalytic subunit spp1/pri1 and the regulatory subunit spp2/pri2) is recruited to DNA at the replicative forks. The primase subunit of the polymerase alpha complex initiates DNA synthesis by oligomerising short RNA primers on both leading and lagging strands. The polypeptide is DNA primase large subunit (Schizosaccharomyces pombe (strain 972 / ATCC 24843) (Fission yeast)).